The primary structure comprises 198 residues: Na(+)-translocating NADH-quinone reductase subunit E (198 aa).

The next 6 helical transmembrane spans lie at 11-31 (SVFIENMALSFFLGMCTFLAV), 35-55 (VSTAFGLGIAVIVVLGIAVPV), 77-97 (FLNFITFIGVIAALVQILEMI), 110-130 (GIFLPLITVNCAIFGGVSFMV), 140-160 (VVYGIGAGTGWMLAIVALAGL), and 176-196 (LGITFITVGLMALGFMSFSGI).

This sequence belongs to the NqrDE/RnfAE family. As to quaternary structure, composed of six subunits; NqrA, NqrB, NqrC, NqrD, NqrE and NqrF.

The protein resides in the cell inner membrane. The catalysed reaction is a ubiquinone + n Na(+)(in) + NADH + H(+) = a ubiquinol + n Na(+)(out) + NAD(+). Functionally, NQR complex catalyzes the reduction of ubiquinone-1 to ubiquinol by two successive reactions, coupled with the transport of Na(+) ions from the cytoplasm to the periplasm. NqrA to NqrE are probably involved in the second step, the conversion of ubisemiquinone to ubiquinol. The polypeptide is Na(+)-translocating NADH-quinone reductase subunit E (Haemophilus ducreyi (strain 35000HP / ATCC 700724)).